A 446-amino-acid chain; its full sequence is DNA repair protein RadA (446 aa).

The C4-type zinc-finger motif lies at 10–27 (CQACGNQQSKWLGKCPDC). 96–103 (GSPGVGKS) contributes to the ATP binding site. A RadA KNRFG motif motif is present at residues 253–257 (KNRFG). The tract at residues 349–446 (DVFVNISGGV…KELSQVLEWM (98 aa)) is lon-protease-like.

It belongs to the RecA family. RadA subfamily.

Functionally, DNA-dependent ATPase involved in processing of recombination intermediates, plays a role in repairing DNA breaks. Stimulates the branch migration of RecA-mediated strand transfer reactions, allowing the 3' invading strand to extend heteroduplex DNA faster. Binds ssDNA in the presence of ADP but not other nucleotides, has ATPase activity that is stimulated by ssDNA and various branched DNA structures, but inhibited by SSB. Does not have RecA's homology-searching function. The sequence is that of DNA repair protein RadA from Campylobacter jejuni subsp. jejuni serotype O:2 (strain ATCC 700819 / NCTC 11168).